The primary structure comprises 510 residues: MFEAGGLFGFTGTTMASLMFFWSVYRQFVPYQIRDYLEKCFYKMFGLVSNSVHIKFTEYTEDKGLKKSQAYDLIRNYLSSKSTARAQRLKANESKNSKSLVLSLDNHEAVEDVFQGVKVVWSLSVWKSNDQADSSEKRYLTLSFHNRYREMITTTYLDHVLREGKEIGLKNRERKLYTNNSSQDYSAWREGRWSNVPFDHPATFETLAMDLEKKEGMKKDLIKFTKGKDYYRKVGKPWKRGYLLFGPPGTGKSTMISAMANFLEYDVYDLELTTVKDNSELKKLMLDTKGKSIVVIEDIDCSLDLTGQRKKKKEEDEDEEEEEKKKEAEKLLKRERGERESKVTLSGLLNAIDGLWSACSGEKIIVFTTNYLDKLDPALIRRGRMDNHIEMSYCRFEAFKVLAKNYLEIESHDLFGEIKRLVEETDMSPADVAENLMPKSDEDDADICLTRLVKSLEEEKEKAKKLAEEEKMKKAARDARRIKKKAEEEHKKKNKVEENGDVSHDNGNHI.

Residues 7 to 25 (LFGFTGTTMASLMFFWSVY) form a helical membrane-spanning segment. An ATP-binding site is contributed by 246-253 (GPPGTGKS). The interval 460–510 (KEKAKKLAEEEKMKKAARDARRIKKKAEEEHKKKNKVEENGDVSHDNGNHI) is disordered.

This sequence belongs to the AAA ATPase family. BCS1 subfamily. The cofactor is Mg(2+).

It is found in the membrane. It catalyses the reaction ATP + H2O = ADP + phosphate + H(+). This is AAA-ATPase At3g28540 from Arabidopsis thaliana (Mouse-ear cress).